The chain runs to 90 residues: MSDAHGIARDQLRAFIERIERLEEEKKTIADDIKDVYGEAKSMGFDAKILRKVISIRKQDADERMEQEAILDTYLQALGMIPAAETEDAA.

It belongs to the UPF0335 family.

The chain is UPF0335 protein Smed_2680 from Sinorhizobium medicae (strain WSM419) (Ensifer medicae).